Here is a 154-residue protein sequence, read N- to C-terminus: Egg-lysin (154 aa).

The N-terminal stretch at 1–18 (MKLLVLCIFAMMATLAMS) is a signal peptide.

Homodimer. As to expression, sperm.

In terms of biological role, dissolves the egg vitelline layer nonenzymatically during fertilization. It creates a hole of about 3 mu-m in diameter through which the sperm pass. The chain is Egg-lysin from Haliotis walallensis (Flat abalone).